A 459-amino-acid polypeptide reads, in one-letter code: Cobyrinate a,c-diamide synthase (459 aa).

The 198-residue stretch at 249–446 (RIGMAFDEAF…VHTHFASRPG (198 aa)) folds into the GATase cobBQ-type domain. The Nucleophile role is filled by Cys332.

This sequence belongs to the CobB/CbiA family. It depends on Mg(2+) as a cofactor.

The enzyme catalyses cob(II)yrinate + 2 L-glutamine + 2 ATP + 2 H2O = cob(II)yrinate a,c diamide + 2 L-glutamate + 2 ADP + 2 phosphate + 2 H(+). It participates in cofactor biosynthesis; adenosylcobalamin biosynthesis; cob(II)yrinate a,c-diamide from sirohydrochlorin (anaerobic route): step 10/10. In terms of biological role, catalyzes the ATP-dependent amidation of the two carboxylate groups at positions a and c of cobyrinate, using either L-glutamine or ammonia as the nitrogen source. This Syntrophotalea carbinolica (strain DSM 2380 / NBRC 103641 / GraBd1) (Pelobacter carbinolicus) protein is Cobyrinate a,c-diamide synthase.